A 77-amino-acid chain; its full sequence is UPF0401 protein ECP_3853 (77 aa).

The protein belongs to the UPF0401 family.

The protein is UPF0401 protein ECP_3853 of Escherichia coli O6:K15:H31 (strain 536 / UPEC).